The following is an 861-amino-acid chain: 1,4-alpha-glucan-branching enzyme (861 aa).

(1,4-alpha-D-glucosyl)n is bound by residues Trp-173 and Lys-208. Asp-429 functions as the Nucleophile in the catalytic mechanism. Glu-484 serves as the catalytic Proton donor.

The protein belongs to the glycosyl hydrolase 13 family. GlgB subfamily. As to quaternary structure, monomer.

The protein localises to the plastid. It is found in the chloroplast. It localises to the amyloplast. The enzyme catalyses Transfers a segment of a (1-&gt;4)-alpha-D-glucan chain to a primary hydroxy group in a similar glucan chain.. Its pathway is glycan biosynthesis; starch biosynthesis. In terms of biological role, catalyzes the formation of the alpha-1,6-glucosidic linkages in starch by scission of a 1,4-alpha-linked oligosaccharide from growing alpha-1,4-glucan chains and the subsequent attachment of the oligosaccharide to the alpha-1,6 position. The chain is 1,4-alpha-glucan-branching enzyme (SBE1) from Solanum tuberosum (Potato).